A 383-amino-acid chain; its full sequence is Succinyl-diaminopimelate desuccinylase (383 aa).

Histidine 74 is a Zn(2+) binding site. Aspartate 76 is a catalytic residue. Aspartate 107 lines the Zn(2+) pocket. Glutamate 141 (proton acceptor) is an active-site residue. Zn(2+) is bound by residues glutamate 142, glutamate 170, and histidine 356.

This sequence belongs to the peptidase M20A family. DapE subfamily. As to quaternary structure, homodimer. The cofactor is Zn(2+). Co(2+) is required as a cofactor.

The catalysed reaction is N-succinyl-(2S,6S)-2,6-diaminopimelate + H2O = (2S,6S)-2,6-diaminopimelate + succinate. It functions in the pathway amino-acid biosynthesis; L-lysine biosynthesis via DAP pathway; LL-2,6-diaminopimelate from (S)-tetrahydrodipicolinate (succinylase route): step 3/3. Functionally, catalyzes the hydrolysis of N-succinyl-L,L-diaminopimelic acid (SDAP), forming succinate and LL-2,6-diaminopimelate (DAP), an intermediate involved in the bacterial biosynthesis of lysine and meso-diaminopimelic acid, an essential component of bacterial cell walls. The protein is Succinyl-diaminopimelate desuccinylase of Ralstonia nicotianae (strain ATCC BAA-1114 / GMI1000) (Ralstonia solanacearum).